Here is a 203-residue protein sequence, read N- to C-terminus: Small ribosomal subunit protein uS7 (203 aa).

Positions 1–21 are disordered; it reads MSSEAPEPDAPASTDDERVSA.

Belongs to the universal ribosomal protein uS7 family. Part of the 30S ribosomal subunit.

Functionally, one of the primary rRNA binding proteins, it binds directly to 16S rRNA where it nucleates assembly of the head domain of the 30S subunit. Is located at the subunit interface close to the decoding center. This Natronomonas pharaonis (strain ATCC 35678 / DSM 2160 / CIP 103997 / JCM 8858 / NBRC 14720 / NCIMB 2260 / Gabara) (Halobacterium pharaonis) protein is Small ribosomal subunit protein uS7.